We begin with the raw amino-acid sequence, 366 residues long: Anhydro-N-acetylmuramic acid kinase (366 aa).

ATP is bound at residue 10–17; it reads GTSLDGVD.

The protein belongs to the anhydro-N-acetylmuramic acid kinase family.

It carries out the reaction 1,6-anhydro-N-acetyl-beta-muramate + ATP + H2O = N-acetyl-D-muramate 6-phosphate + ADP + H(+). It functions in the pathway amino-sugar metabolism; 1,6-anhydro-N-acetylmuramate degradation. It participates in cell wall biogenesis; peptidoglycan recycling. In terms of biological role, catalyzes the specific phosphorylation of 1,6-anhydro-N-acetylmuramic acid (anhMurNAc) with the simultaneous cleavage of the 1,6-anhydro ring, generating MurNAc-6-P. Is required for the utilization of anhMurNAc either imported from the medium or derived from its own cell wall murein, and thus plays a role in cell wall recycling. The sequence is that of Anhydro-N-acetylmuramic acid kinase from Nitrobacter winogradskyi (strain ATCC 25391 / DSM 10237 / CIP 104748 / NCIMB 11846 / Nb-255).